A 245-amino-acid polypeptide reads, in one-letter code: ATP synthase subunit a (245 aa).

The next 7 helical transmembrane spans lie at 5 to 25, 37 to 57, 99 to 119, 125 to 145, 157 to 177, 187 to 209, and 221 to 241; these read LWFT…MMSV, ISNY…FFIA, YIVT…IPGF, FPSV…VHGL, FLGP…CSHF, LYAN…PLGF, and SLIQ…EATA.

Belongs to the ATPase A chain family. As to quaternary structure, F-type ATPases have 2 components, CF(1) - the catalytic core - and CF(0) - the membrane proton channel. CF(1) has five subunits: alpha(3), beta(3), gamma(1), delta(1), epsilon(1). CF(0) has three main subunits: a(1), b(2) and c(9-12). The alpha and beta chains form an alternating ring which encloses part of the gamma chain. CF(1) is attached to CF(0) by a central stalk formed by the gamma and epsilon chains, while a peripheral stalk is formed by the delta and b chains.

The protein localises to the cell inner membrane. Its function is as follows. Key component of the proton channel; it plays a direct role in the translocation of protons across the membrane. The chain is ATP synthase subunit a from Koribacter versatilis (strain Ellin345).